Consider the following 463-residue polypeptide: Paraneoplastic antigen Ma3 (463 aa).

Residues 363–410 form a disordered region; sequence VGAVPLPASGNSFDARPSQGYRRRRGRGQHRRGGVARAGSRGSRKRKR. The span at 383 to 396 shows a compositional bias: basic residues; that stretch reads YRRRRGRGQHRRGG. Residues 412 to 429 form a CCHC-type zinc finger; the sequence is TFCYSCGEDGHIRVQCIN. Positions 440–463 are disordered; the sequence is KQAAVESGNGNWAWDKSHPKSKAK.

The protein belongs to the PNMA family. As to expression, expressed at high levels in the brain and testis. Expressed at lower levels in the heart, trachea and kidney.

The protein resides in the nucleus. Its subcellular location is the nucleolus. This is Paraneoplastic antigen Ma3 (PNMA3) from Homo sapiens (Human).